Here is a 61-residue protein sequence, read N- to C-terminus: Large ribosomal subunit protein uL30 (61 aa).

The protein belongs to the universal ribosomal protein uL30 family. As to quaternary structure, part of the 50S ribosomal subunit.

The polypeptide is Large ribosomal subunit protein uL30 (Frankia alni (strain DSM 45986 / CECT 9034 / ACN14a)).